Reading from the N-terminus, the 286-residue chain is Putative transcription factor kapC (286 aa).

The span at 1–10 (MQPALAPAPH) shows a compositional bias: pro residues. Residues 1–120 (MQPALAPAPH…QNRAAQRAFR (120 aa)) are disordered. Residues 26-40 (HDQLLAAHQHLSHPQ) show a composition bias toward low complexity. Pro residues predominate over residues 41 to 54 (QPRPQAPATQPPHM). Positions 55–67 (QPNTASPRDQNNI) are enriched in polar residues. The segment covering 81–92 (PQTPPQPEPAPQ) has biased composition (pro residues). One can recognise a bZIP domain in the interval 102-165 (PLSTSKRAAQ…EYIINLQTRL (64 aa)). A basic motif region spans residues 103–126 (LSTSKRAAQNRAAQRAFRQRKESY). A compositionally biased stretch (low complexity) spans 108–118 (RAAQNRAAQRA). Residues 130–161 (LEEQVKHQEAITEEYKALHAENYQLREYIINL) are leucine-zipper. Residues 197 to 286 (RGNAASAGPA…QEPDGLPVVS (90 aa)) are disordered. Residues 198–222 (GNAASAGPAPAGPGPQQSQPNQNQG) are compositionally biased toward low complexity.

The protein belongs to the bZIP family.

The protein resides in the nucleus. Its function is as follows. Putative transcription factor. This chain is Putative transcription factor kapC (kapC), found in Aspergillus terreus (strain NIH 2624 / FGSC A1156).